Reading from the N-terminus, the 114-residue chain is Evasin-1 (114 aa).

The N-terminal stretch at methionine 1–cysteine 20 is a signal peptide. 4 disulfides stabilise this stretch: cysteine 32-cysteine 53, cysteine 49-cysteine 90, cysteine 66-cysteine 95, and cysteine 85-cysteine 104. N-linked (GlcNAc...) asparagine glycans are attached at residues asparagine 39, asparagine 54, and asparagine 62.

Belongs to the evasin C8 family. In terms of assembly, monomer.

It is found in the secreted. Functionally, salivary chemokine-binding protein which shows chemokine neutralizing activity and binds to host chemokines CCL3, CCL4 and CCL18. Binds to CCL3 with 1:1 stoichiometry. This Rhipicephalus sanguineus (Brown dog tick) protein is Evasin-1.